Reading from the N-terminus, the 355-residue chain is Holliday junction branch migration complex subunit RuvB (355 aa).

Positions 4–190 (TDKLAAERII…FGIVARLEFY (187 aa)) are large ATPase domain (RuvB-L). ATP-binding positions include L29, R30, G71, K74, T75, T76, 137–139 (EDY), R180, Y190, and R227. T75 is a binding site for Mg(2+). Residues 191–261 (DADQLSRIVQ…IADAALAMLD (71 aa)) form a small ATPAse domain (RuvB-S) region. The tract at residues 264–355 (PVGFDLMDRK…QSIWDTPDAQ (92 aa)) is head domain (RuvB-H). DNA-binding residues include R300, R319, and R324.

This sequence belongs to the RuvB family. In terms of assembly, homohexamer. Forms an RuvA(8)-RuvB(12)-Holliday junction (HJ) complex. HJ DNA is sandwiched between 2 RuvA tetramers; dsDNA enters through RuvA and exits via RuvB. An RuvB hexamer assembles on each DNA strand where it exits the tetramer. Each RuvB hexamer is contacted by two RuvA subunits (via domain III) on 2 adjacent RuvB subunits; this complex drives branch migration. In the full resolvosome a probable DNA-RuvA(4)-RuvB(12)-RuvC(2) complex forms which resolves the HJ.

The protein localises to the cytoplasm. The catalysed reaction is ATP + H2O = ADP + phosphate + H(+). Functionally, the RuvA-RuvB-RuvC complex processes Holliday junction (HJ) DNA during genetic recombination and DNA repair, while the RuvA-RuvB complex plays an important role in the rescue of blocked DNA replication forks via replication fork reversal (RFR). RuvA specifically binds to HJ cruciform DNA, conferring on it an open structure. The RuvB hexamer acts as an ATP-dependent pump, pulling dsDNA into and through the RuvAB complex. RuvB forms 2 homohexamers on either side of HJ DNA bound by 1 or 2 RuvA tetramers; 4 subunits per hexamer contact DNA at a time. Coordinated motions by a converter formed by DNA-disengaged RuvB subunits stimulates ATP hydrolysis and nucleotide exchange. Immobilization of the converter enables RuvB to convert the ATP-contained energy into a lever motion, pulling 2 nucleotides of DNA out of the RuvA tetramer per ATP hydrolyzed, thus driving DNA branch migration. The RuvB motors rotate together with the DNA substrate, which together with the progressing nucleotide cycle form the mechanistic basis for DNA recombination by continuous HJ branch migration. Branch migration allows RuvC to scan DNA until it finds its consensus sequence, where it cleaves and resolves cruciform DNA. The protein is Holliday junction branch migration complex subunit RuvB of Burkholderia multivorans (strain ATCC 17616 / 249).